The sequence spans 291 residues: N-acetylmannosamine kinase (291 aa).

ATP-binding positions include 5 to 12 (AIDIGGTK) and 132 to 139 (GVGGGVVS). Residues His-156, Cys-166, Cys-168, and Cys-173 each contribute to the Zn(2+) site.

This sequence belongs to the ROK (NagC/XylR) family. NanK subfamily. In terms of assembly, homodimer.

It catalyses the reaction an N-acyl-D-mannosamine + ATP = an N-acyl-D-mannosamine 6-phosphate + ADP + H(+). The protein operates within amino-sugar metabolism; N-acetylneuraminate degradation; D-fructose 6-phosphate from N-acetylneuraminate: step 2/5. Its function is as follows. Catalyzes the phosphorylation of N-acetylmannosamine (ManNAc) to ManNAc-6-P. This chain is N-acetylmannosamine kinase, found in Escherichia fergusonii (strain ATCC 35469 / DSM 13698 / CCUG 18766 / IAM 14443 / JCM 21226 / LMG 7866 / NBRC 102419 / NCTC 12128 / CDC 0568-73).